A 312-amino-acid polypeptide reads, in one-letter code: Putative S-adenosyl-L-methionine-dependent methyltransferase BCG_1768c (312 aa).

S-adenosyl-L-methionine is bound by residues Asp130 and 159–160 (DL).

It belongs to the UPF0677 family.

Functionally, exhibits S-adenosyl-L-methionine-dependent methyltransferase activity. This Mycobacterium bovis (strain BCG / Pasteur 1173P2) protein is Putative S-adenosyl-L-methionine-dependent methyltransferase BCG_1768c.